The chain runs to 492 residues: FAD-containing monooxygenase EthA (492 aa).

FAD-binding positions include S15, E36, 44-47 (TWDL), D56, and V104. Position 54–56 (54–56 (RSD)) interacts with NADP(+). Residues 183–189 (SGATAVT) and 207–208 (RS) each bind NADP(+).

This sequence belongs to the FAD-binding monooxygenase family. Requires FAD as cofactor.

Its subcellular location is the cell membrane. It carries out the reaction ethionamide + NADPH + O2 + H(+) = ethionamide S-oxide + NADP(+) + H2O. Functionally, monooxygenase able to convert a wide range of ketones to the corresponding esters or lactones via a Baeyer-Villiger oxidation reaction. Can act on long-chain aliphatic ketones (2-hexanone to 2-dodecanone) and on aromatic ketones (phenylacetone and benzylacetone). Is also able to catalyze enantioselective sulfoxidation of methyl-p-tolylsulfide. In vivo, likely functions as a BVMO, but the exact nature of the physiological substrate(s) remains to be established. In terms of biological role, is responsible for the activation of several thiocarbamide-containing pro-drugs, such as ethionamide (ETH), isoxyl (ISO) and thiacetazone (TAC), into reactive species. This is FAD-containing monooxygenase EthA (ethA) from Mycolicibacterium smegmatis (strain ATCC 700084 / mc(2)155) (Mycobacterium smegmatis).